The chain runs to 229 residues: Large ribosomal subunit protein uL1 (229 aa).

Belongs to the universal ribosomal protein uL1 family. In terms of assembly, part of the 50S ribosomal subunit.

Binds directly to 23S rRNA. The L1 stalk is quite mobile in the ribosome, and is involved in E site tRNA release. In terms of biological role, protein L1 is also a translational repressor protein, it controls the translation of the L11 operon by binding to its mRNA. In Pasteurella multocida (strain Pm70), this protein is Large ribosomal subunit protein uL1.